A 613-amino-acid chain; its full sequence is MTMSFCALLFFLIISPTLAATKSAADYYVRSLPGAPEGPLLKMHAGHIEVDAPNNGNLFFWHYQNRHIANRQRTVIWLNGGPGCSSMDGALMEIGPYRLKDNHTLEYNNGSWDEFANLLFVDQPVGTGFSYVNTNSYLHELDEMAAQFIIFLEKWFQLFPEYERDDIYIAGESYAGQHIPYIAKAIQERNKKVDDKNSARWNLRGLVIGNGWISPAQQYPSYLNFAYTEGLVKEGSSLAKDLDVYQSVCESKISAAPNAVNIKDCESVLQQILSRTMDSERKCYNMYDVRLRDVYPSCGMNWPSDLVSVKPYLQSRDVVRALNINPDKKSGWEECSGAVGSTFTAANSVPSVQLLPELLESGVRILLFSGDKDLICNHIGTEQLINNMKWNGGIGFETSPGVWAPRRHWTFEGEPAGIYQYARNLTYVLFYNASHMVPYDLPRQSRDMLDRFMRVDIANIGGQPADSRIDGEKLPQTSVGGHPNSTAAEQQAKEKIKETEWKAYAKSGEAALIVVIIGVTVWGFFIWRSRRRNRGYEGVYQKELGSGSILERFQNKRSGAGDVEAGDFDESELDTLHSPGLERENYAVGDDSDEDDPNHPRPTASSREDGTHP.

The N-terminal stretch at 1–19 is a signal peptide; it reads MTMSFCALLFFLIISPTLA. Over 20–506 the chain is Lumenal; the sequence is ATKSAADYYV…KETEWKAYAK (487 aa). Asn-102 and Asn-109 each carry an N-linked (GlcNAc...) asparagine glycan. Active-site residues include Ser-173 and Asp-373. Residues Asn-424 and Asn-432 are each glycosylated (N-linked (GlcNAc...) asparagine). The active site involves His-435. Positions 463-490 are disordered; it reads QPADSRIDGEKLPQTSVGGHPNSTAAEQ. The segment covering 475–489 has biased composition (polar residues); it reads PQTSVGGHPNSTAAE. N-linked (GlcNAc...) asparagine glycosylation is present at Asn-484. Residues 507–527 traverse the membrane as a helical segment; the sequence is SGEAALIVVIIGVTVWGFFIW. Topologically, residues 528–613 are cytoplasmic; it reads RSRRRNRGYE…ASSREDGTHP (86 aa). The interval 559–613 is disordered; that stretch reads GAGDVEAGDFDESELDTLHSPGLERENYAVGDDSDEDDPNHPRPTASSREDGTHP. The span at 564-573 shows a compositional bias: acidic residues; sequence EAGDFDESEL.

This sequence belongs to the peptidase S10 family.

It is found in the golgi apparatus. The protein resides in the trans-Golgi network membrane. The enzyme catalyses Preferential release of a C-terminal arginine or lysine residue.. Functionally, protease with a carboxypeptidase B-like function involved in the C-terminal processing of the lysine and arginine residues from protein precursors. Promotes cell fusion and is involved in the programmed cell death. The polypeptide is Pheromone-processing carboxypeptidase kex1 (kex1) (Aspergillus clavatus (strain ATCC 1007 / CBS 513.65 / DSM 816 / NCTC 3887 / NRRL 1 / QM 1276 / 107)).